The primary structure comprises 426 residues: Histidine--tRNA ligase (426 aa).

This sequence belongs to the class-II aminoacyl-tRNA synthetase family. Homodimer.

It is found in the cytoplasm. It catalyses the reaction tRNA(His) + L-histidine + ATP = L-histidyl-tRNA(His) + AMP + diphosphate + H(+). The chain is Histidine--tRNA ligase from Streptococcus pyogenes serotype M49 (strain NZ131).